We begin with the raw amino-acid sequence, 308 residues long: Glucan 1,3-beta-glucosidase (308 aa).

Residues 1 to 18 form the signal peptide; it reads MQIKFLTTLATVLTSVAA. Glu119 functions as the Proton donor in the catalytic mechanism. Asn197 carries N-linked (GlcNAc...) asparagine glycosylation. Glu228 functions as the Nucleophile in the catalytic mechanism.

It belongs to the glycosyl hydrolase 17 family.

The protein localises to the secreted. It is found in the cell wall. The enzyme catalyses Successive hydrolysis of beta-D-glucose units from the non-reducing ends of (1-&gt;3)-beta-D-glucans, releasing alpha-glucose.. This Candida albicans (Yeast) protein is Glucan 1,3-beta-glucosidase (BGL2).